Reading from the N-terminus, the 322-residue chain is MNFKYSILFICFGTLDRGLIPECPFNEYDILFFVYTRQQRDGIVLTEETLQNYDLFKKSTISRQVVFIDHGFLSNGNNENFIAMAKALIEKDNFLVISVDWKKGACNAFASTLDYLGYSTAVGNTRHVGKYVADFTKLLVEQYKVSMSNIRLIGHSLGAHTSGFAGKEVQELKLNKYSNIDGLDPAGPSFDSNDCPERLCETDAEYVQIIHTSNILGVYSKIGTVDFYMNYGSHQPGCGRFFSPSCSHTKAVKYLTECIKHECCLIGTPWKKYFSTPKPISQCTKDTCVCVGLNAKSYPARGSFYVPVEATAPYCHNEGIKL.

Positions 1–18 (MNFKYSILFICFGTLDRG) are cleaved as a signal peptide. An intrachain disulfide couples C23 to C106. Residue S156 is the Nucleophile of the active site. The active-site Charge relay system is D184. 2 disulfides stabilise this stretch: C195–C200 and C238–C246. H248 functions as the Charge relay system in the catalytic mechanism. Intrachain disulfides connect C263–C290, C264–C315, and C283–C288.

It belongs to the AB hydrolase superfamily. Lipase family. Post-translationally, contains six disulfide bonds. In terms of processing, is not glycosylated. Expressed by the venom gland.

Its subcellular location is the secreted. The enzyme catalyses a 1,2-diacyl-sn-glycero-3-phosphocholine + H2O = a 2-acyl-sn-glycero-3-phosphocholine + a fatty acid + H(+). In terms of biological role, catalyzes the hydrolysis of phosphatidylcholine with phospholipase A1 activity. Shows hemolytic activity. Acts as an allergen. In Polybia paulista (Neotropical social wasp), this protein is Phospholipase A1.